The primary structure comprises 390 residues: Lipoyl synthase, mitochondrial (390 aa).

Residues 1–19 constitute a mitochondrion transit peptide; it reads MPTLLRILRPPRSPFTRCL. A disordered region spans residues 23–48; it reads ATPSSSGSSSRSKFTESLETGPGLDD. 7 residues coordinate [4Fe-4S] cluster: Cys98, Cys103, Cys109, Cys136, Cys140, Cys143, and Ser350. In terms of domain architecture, Radical SAM core spans 119-339; it reads AEGRSAATAT…KEVAENLGFL (221 aa).

It belongs to the radical SAM superfamily. Lipoyl synthase family. Requires [4Fe-4S] cluster as cofactor.

The protein localises to the mitochondrion. It catalyses the reaction [[Fe-S] cluster scaffold protein carrying a second [4Fe-4S](2+) cluster] + N(6)-octanoyl-L-lysyl-[protein] + 2 oxidized [2Fe-2S]-[ferredoxin] + 2 S-adenosyl-L-methionine + 4 H(+) = [[Fe-S] cluster scaffold protein] + N(6)-[(R)-dihydrolipoyl]-L-lysyl-[protein] + 4 Fe(3+) + 2 hydrogen sulfide + 2 5'-deoxyadenosine + 2 L-methionine + 2 reduced [2Fe-2S]-[ferredoxin]. It participates in protein modification; protein lipoylation via endogenous pathway; protein N(6)-(lipoyl)lysine from octanoyl-[acyl-carrier-protein]: step 2/2. Its function is as follows. Catalyzes the radical-mediated insertion of two sulfur atoms into the C-6 and C-8 positions of the octanoyl moiety bound to the lipoyl domains of lipoate-dependent enzymes, thereby converting the octanoylated domains into lipoylated derivatives. This is Lipoyl synthase, mitochondrial from Laccaria bicolor (strain S238N-H82 / ATCC MYA-4686) (Bicoloured deceiver).